The chain runs to 91 residues: MRHIGVFVGVLALALVLLVVEARSDAERGVCACPRIYMPVCGSNLKTYNNDCLLRCEINSDLGRANNLRKIADQACDNLTDNVNDFIPQEY.

The signal sequence occupies residues 1–22; sequence MRHIGVFVGVLALALVLLVVEA. Residues 25-78 enclose the Kazal-like domain; that stretch reads DAERGVCACPRIYMPVCGSNLKTYNNDCLLRCEINSDLGRANNLRKIADQACDN. 3 cysteine pairs are disulfide-bonded: Cys-31–Cys-56, Cys-33–Cys-52, and Cys-41–Cys-76. Asn-78 carries N-linked (GlcNAc...) asparagine glycosylation.

Interacts with human PLG (plasmin). As to expression, female salivary gland. Female gut at 3 and 24 hours after blood feeding. Female carcass. Male tissues. Not detected in ovary and fat body at 3 and 24 hours after blood feeding.

It localises to the secreted. In terms of biological role, anticoagulant protein that decreases host thrombin (F2) activity via an uncompetitive inhibition mechanism. Inhibits amidolytic activity of host plasmin (PLG). Inhibits amidolytic activity of host trypsin. Inhibits trypsin-like endogenous activity from gut of female mosquitoes 24 hours after feeding and weakly affects enzyme activity from gut 3 hours after feeding, suggesting a possible role as an inhibitor of endogenous proteases. Its function is as follows. (Microbial infection) Limits host plasmin-mediated enhancement of dengue virus type 2 infection in mosquito midgut. This is Kazal-type trypsin inhibitor from Aedes aegypti (Yellowfever mosquito).